The sequence spans 367 residues: CST complex subunit STN1 (367 aa).

Residues 56–154 (VEILGTVIGR…EIRVTTYYKV (99 aa)) constitute a DNA-binding region (OB). 2 winged helix-turn-helix (wHTH) regions span residues 190 to 294 (RAFS…YVTR) and 295 to 367 (EDKE…YTAF).

Belongs to the STN1 family. Component of the CST complex, composed of TEN1, CTC1 and STN1. Interacts with TEN1 and CTC1; the interaction is direct. Interacts with ACD/TPP1.

The protein localises to the nucleus. It localises to the chromosome. Its subcellular location is the telomere. Its function is as follows. Component of the CST complex, a complex that binds to single-stranded DNA and is required to protect telomeres from DNA degradation. The CST complex binds single-stranded DNA with high affinity in a sequence-independent manner, while isolated subunits bind DNA with low affinity by themselves. In addition to telomere protection, the CST complex has probably a more general role in DNA metabolism at non-telomeric sites. In Ailuropoda melanoleuca (Giant panda), this protein is CST complex subunit STN1.